The sequence spans 705 residues: Dolichyl-diphosphooligosaccharide--protein glycosyltransferase subunit STT3A (705 aa).

At 1–17 the chain is on the cytoplasmic side; sequence MTKLGFLRLSYEKQDTL. The helical transmembrane segment at 18-38 threads the bilayer; that stretch reads LKLLILSMAAVLSFSTRLFAV. At 39–119 the chain is on the lumenal side; the sequence is LRFESVIHEF…IDIRNVCVFL (81 aa). The DXD motif 1 motif lies at 47-49; it reads EFD. Asp-49 is a Mn(2+) binding site. Residues 120–138 traverse the membrane as a helical segment; it reads APLFSSFTTIVTYHLTKEL. Residues 139 to 140 are Cytoplasmic-facing; sequence KD. The helical transmembrane segment at 141–158 threads the bilayer; that stretch reads AGAGLLAAAMIAVVPGYI. Residues 159–169 lie on the Lumenal side of the membrane; the sequence is SRSVAGSYDNE. Residues Asp-167 and Glu-169 each coordinate Mn(2+). The DXD motif 2 motif lies at 167-169; the sequence is DNE. The chain crosses the membrane as a helical span at residues 170 to 189; that stretch reads GIAIFCMLLTYYMWIKAVKT. The Cytoplasmic segment spans residues 190 to 191; it reads GS. A helical membrane pass occupies residues 192 to 206; that stretch reads IYWAAKCALAYFYMV. At 207-211 the chain is on the lumenal side; that stretch reads SSWGG. Residues 212–228 traverse the membrane as a helical segment; that stretch reads YVFLINLIPLHVLVLML. Residues 229–233 lie on the Cytoplasmic side of the membrane; that stretch reads TGRFS. A helical membrane pass occupies residues 234–259; the sequence is HRIYVAYCTVYCLGTILSMQISFVGF. At 260-267 the chain is on the lumenal side; that stretch reads QPVLSSEH. Residues 268–287 form a helical membrane-spanning segment; the sequence is MAAFGVFGLCQIHAFVDYLR. Topologically, residues 288–300 are cytoplasmic; sequence SKLNPQQFEVLFR. The chain crosses the membrane as a helical span at residues 301–321; that stretch reads SVISLVGFVLLTVGALLMLTG. Topologically, residues 322-356 are lumenal; that stretch reads KISPWTGRFYSLLDPSYAKNNIPIIASVSEHQPTT. Residues 348–351 carry the SVSE motif motif; sequence SVSE. Residues 357–379 form a helical membrane-spanning segment; the sequence is WSSYYFDLQLLVFMFPVGLYYCF. Residues 380–385 lie on the Cytoplasmic side of the membrane; that stretch reads SNLSDA. The helical transmembrane segment at 386-402 threads the bilayer; the sequence is RIFIIMYGVTSMYFSAV. Topologically, residues 403 to 406 are lumenal; sequence MVRL. Position 405 (Arg-405) interacts with dolichyl diphosphooligosaccharide. A helical transmembrane segment spans residues 407-428; the sequence is MLVLAPVMCILSGIGVSQVLST. At 429–453 the chain is on the cytoplasmic side; that stretch reads YMKNLDISRPDKKSKKQQDSTYPIK. Residues 454 to 473 traverse the membrane as a helical segment; it reads NEVASGMILVMAFFLITYTF. Residues 474-705 lie on the Lumenal side of the membrane; sequence HSTWVTSEAY…DLDNRGLSRT (232 aa). The segment at 525–527 is interacts with target acceptor peptide in protein substrate; it reads WWD. The short motif at 525–529 is the WWDYG motif element; it reads WWDYG. Tyr-530 provides a ligand contact to dolichyl diphosphooligosaccharide. 2 N-linked (GlcNAc...) asparagine glycosylation sites follow: Asn-537 and Asn-544. N-linked (GlcNAc...) (high mannose) asparagine glycosylation occurs at Asn-548. Positions 592 to 599 match the DK motif motif; that stretch reads DINKFLWM.

This sequence belongs to the STT3 family. In terms of assembly, component of the oligosaccharyltransferase (OST) complex. There are 2 OST complexes, OST-A and OST-B, which contain STT3A or STT3B as catalytic subunit, respectively. OST-A and OST-B contain common core subunits RPN1, RPN2, OST48, OST4, DAD1 and TMEM258, and OST-A contains DC2/OSTC and KRTCAP2/KCP2 specific accessory subunits. OST-A complex assembly occurs through the formation of 3 subcomplexes. Subcomplex 1 contains RPN1 and TMEM258, subcomplex 2 contains the OST-A-specific subunits STT3A, DC2/OSTC, and KCP2 as well as the core subunit OST4, and subcomplex 3 contains RPN2, DAD1, and OST48. The OST-A complex can form stable complexes with the Sec61 complex or with both the Sec61 and TRAP complexes. Requires Mg(2+) as cofactor. The cofactor is Mn(2+).

It is found in the endoplasmic reticulum. Its subcellular location is the endoplasmic reticulum membrane. The enzyme catalyses a di-trans,poly-cis-dolichyl diphosphooligosaccharide + L-asparaginyl-[protein] = N(4)-(oligosaccharide-(1-&gt;4)-N-acetyl-beta-D-glucosaminyl-(1-&gt;4)-N-acetyl-beta-D-glucosaminyl)-L-asparaginyl-[protein] + a di-trans,poly-cis-dolichyl diphosphate + H(+). Its pathway is protein modification; protein glycosylation. In terms of biological role, catalytic subunit of the oligosaccharyl transferase (OST) complex that catalyzes the initial transfer of a defined glycan (Glc(3)Man(9)GlcNAc(2) in eukaryotes) from the lipid carrier dolichol-pyrophosphate to an asparagine residue within an Asn-X-Ser/Thr consensus motif in nascent polypeptide chains, the first step in protein N-glycosylation. N-glycosylation occurs cotranslationally and the complex associates with the Sec61 complex at the channel-forming translocon complex that mediates protein translocation across the endoplasmic reticulum (ER). All subunits are required for a maximal enzyme activity. This subunit contains the active site and the acceptor peptide and donor lipid-linked oligosaccharide (LLO) binding pockets. STT3A is present in the majority of OST complexes and mediates cotranslational N-glycosylation of most sites on target proteins, while STT3B-containing complexes are required for efficient post-translational glycosylation and mediate glycosylation of sites that have been skipped by STT3A. STT3A-containing OST-A complex is also required to prevent hyperglycosylation of some target proteins by preventing glycosylation of facultative sites before folding of target proteins is completed. The protein is Dolichyl-diphosphooligosaccharide--protein glycosyltransferase subunit STT3A of Mus musculus (Mouse).